We begin with the raw amino-acid sequence, 244 residues long: Transcriptional activator protein Anr (244 aa).

A nucleoside 3',5'-cyclic phosphate is bound at residue 21–149 (APLCLPLSLN…RVMSREIRDD (129 aa)). An HTH crp-type domain is found at 159–232 (KTADERIATF…GKEVHILDPI (74 aa)). Positions 192 to 211 (RNEIGNYLGLAVETVSRVFT) form a DNA-binding region, H-T-H motif.

Transcriptional activator of anaerobic gene expression. Regulates the expression of the components of the hydrogen cyanide synthase (HcnABC) in a positive manner. May also act as an iron sensor. This chain is Transcriptional activator protein Anr, found in Pseudomonas protegens (strain DSM 19095 / LMG 27888 / CFBP 6595 / CHA0).